Here is a 577-residue protein sequence, read N- to C-terminus: Arginine--tRNA ligase (577 aa).

Positions 122-132 (PNVAKEMHVGH) match the 'HIGH' region motif.

The protein belongs to the class-I aminoacyl-tRNA synthetase family. In terms of assembly, monomer.

Its subcellular location is the cytoplasm. It catalyses the reaction tRNA(Arg) + L-arginine + ATP = L-arginyl-tRNA(Arg) + AMP + diphosphate. The polypeptide is Arginine--tRNA ligase (Salmonella newport (strain SL254)).